The sequence spans 211 residues: MNTTSSKSKKKQDDQVGTRFLGVRRRPWGRYAAEIRDPTTKERHWLGTFDTAEEAALAYDRAARSMRGTRARTNFVYSDMPPSSSVTSIVSPDDPPPPPPPPAPPSNDPVDYMMMFNQYSSTDSPMLQPHCDQVDSYMFGGSQSSNSYCYSNDSSNELPPLPSDLSNSCYSQPQWTWTGDDYSSEYVHSPMFSRMPPVSDSFPQGFNYFGS.

Disordered stretches follow at residues 1 to 21 (MNTT…TRFL) and 74 to 110 (NFVY…NDPV). The AP2/ERF DNA-binding region spans 19–76 (RFLGVRRRPWGRYAAEIRDPTTKERHWLGTFDTAEEAALAYDRAARSMRGTRARTNFV). Positions 81–92 (PPSSSVTSIVSP) are enriched in low complexity. The segment covering 93–107 (DDPPPPPPPPAPPSN) has biased composition (pro residues).

It belongs to the AP2/ERF transcription factor family. ERF subfamily. Expressed in germinating seeds. Present in young shoots, at low levels, especially in leaf primordia and developing leaf blades. Also detected in vascular tissue, mostly in xylem, of young leaves, petioles and hypocotyls.

It localises to the nucleus. Its function is as follows. Cell division-promoting factor involved in leaf blade differentiation, inflorescence branching, as well as in carpel and silique shape. Promotes the number of xylem cells. Positively regulates the gibberellin signaling pathway leading to germination, hypocotyl elongation, and leaf expansion. Probably acts as a transcriptional activator. Binds to the GCC-box pathogenesis-related promoter element. May be involved in the regulation of gene expression by stress factors and by components of stress signal transduction pathways. This is Ethylene-responsive transcription factor LEP (LEP) from Arabidopsis thaliana (Mouse-ear cress).